A 120-amino-acid chain; its full sequence is MTKFVRKYMFCLVLVFAACSLVVNSIRTPPLKNTVNGGEKKNADIEQAQTHHKKEISKNGGVEMEMYPTGSSLPDCSYACGACSPCKRVMISFECSVAESCSVIYRCTCRGRYYHVPSRA.

The first 25 residues, methionine 1 to serine 25, serve as a signal peptide directing secretion. Intrachain disulfides connect cysteine 76/cysteine 107, cysteine 80/cysteine 86, cysteine 83/cysteine 109, and cysteine 95/cysteine 101.

The protein belongs to the plant cysteine rich small secretory peptide family. Epidermal patterning factor subfamily. In terms of assembly, interacts with ERECTA, ERL1 and TMM. Expressed in leaves, especially by the MMCs and their early descendants cells (stomatal lineage cells) including guard mother cells (GMCs).

The protein resides in the secreted. Functionally, controls stomatal patterning. Regulates the number of cells that enter, and remain in, the stomatal lineage by inhibiting protodermal cells from adopting the meristemoid mother cell (MMC) fate in a non-cell-autonomous manner. Mediates stomatal development inhibition. MEPF2: mobile signal controlling stomatal development in a non-cell-autonomous manner. Uses ERECTA as major receptor. Inactivated by cleavage by CRSP (AC Q9LNU1). May act by competing with somatogen (AC Q9SV72) for the same receptor, TMM (AC Q9SSD1). The chain is Protein EPIDERMAL PATTERNING FACTOR 2 from Arabidopsis thaliana (Mouse-ear cress).